The sequence spans 200 residues: uncharacterized protein (200 aa).

It belongs to the HAD-like hydrolase superfamily. CbbY/CbbZ/Gph/YieH family.

This is an uncharacterized protein from Haemophilus influenzae (strain ATCC 51907 / DSM 11121 / KW20 / Rd).